Here is a 349-residue protein sequence, read N- to C-terminus: Magnesium-protoporphyrin IX monomethyl ester [oxidative] cyclase (349 aa).

The disordered stretch occupies residues 1 to 22 (MTATASASSVSGSLGRNELPPH).

Belongs to the AcsF family. Fe cation is required as a cofactor.

The catalysed reaction is Mg-protoporphyrin IX 13-monomethyl ester + 3 NADPH + 3 O2 + 2 H(+) = 3,8-divinyl protochlorophyllide a + 3 NADP(+) + 5 H2O. It functions in the pathway porphyrin-containing compound metabolism; chlorophyll biosynthesis (light-independent). Its function is as follows. Catalyzes the formation of the isocyclic ring in chlorophyll biosynthesis. Mediates the cyclase reaction, which results in the formation of divinylprotochlorophyllide (Pchlide) characteristic of all chlorophylls from magnesium-protoporphyrin IX 13-monomethyl ester (MgPMME). The protein is Magnesium-protoporphyrin IX monomethyl ester [oxidative] cyclase of Prochlorococcus marinus (strain MIT 9211).